Consider the following 350-residue polypeptide: Hydroxymethylglutaryl-CoA synthase (350 aa).

Glutamate 83 acts as the Proton donor/acceptor in catalysis. The active-site Acyl-thioester intermediate is cysteine 115. 2 residues coordinate (3S)-3-hydroxy-3-methylglutaryl-CoA: cysteine 115 and threonine 156. Arginine 204 contributes to the CoA binding site. (3S)-3-hydroxy-3-methylglutaryl-CoA contacts are provided by threonine 206 and histidine 239. Histidine 239 (proton donor/acceptor) is an active-site residue. Lysine 244 lines the CoA pocket. (3S)-3-hydroxy-3-methylglutaryl-CoA-binding residues include asparagine 271 and serine 301.

The protein belongs to the thiolase-like superfamily. Archaeal HMG-CoA synthase family. Interacts with acetoacetyl-CoA thiolase that catalyzes the precedent step in the pathway and with a DUF35 protein. The acetoacetyl-CoA thiolase/HMG-CoA synthase complex channels the intermediate via a fused CoA-binding site, which allows for efficient coupling of the endergonic thiolase reaction with the exergonic HMGCS reaction.

The catalysed reaction is acetoacetyl-CoA + acetyl-CoA + H2O = (3S)-3-hydroxy-3-methylglutaryl-CoA + CoA + H(+). It functions in the pathway metabolic intermediate biosynthesis; (R)-mevalonate biosynthesis; (R)-mevalonate from acetyl-CoA: step 2/3. In terms of biological role, catalyzes the condensation of acetyl-CoA with acetoacetyl-CoA to form 3-hydroxy-3-methylglutaryl-CoA (HMG-CoA). Functions in the mevalonate (MVA) pathway leading to isopentenyl diphosphate (IPP), a key precursor for the biosynthesis of isoprenoid compounds that are building blocks of archaeal membrane lipids. The sequence is that of Hydroxymethylglutaryl-CoA synthase from Thermococcus onnurineus (strain NA1).